Consider the following 463-residue polypeptide: ATP-dependent protease ATPase subunit HslU (463 aa).

ATP is bound by residues isoleucine 19 and 61 to 66 (GVGKTE). Residues 154-175 (FGGNQNSNQTSDAQEDDEIEKK) are disordered. A compositionally biased stretch (polar residues) spans 156-165 (GNQNSNQTSD). The ATP site is built by aspartate 277, glutamate 341, and arginine 413.

This sequence belongs to the ClpX chaperone family. HslU subfamily. As to quaternary structure, a double ring-shaped homohexamer of HslV is capped on each side by a ring-shaped HslU homohexamer. The assembly of the HslU/HslV complex is dependent on binding of ATP.

The protein resides in the cytoplasm. ATPase subunit of a proteasome-like degradation complex; this subunit has chaperone activity. The binding of ATP and its subsequent hydrolysis by HslU are essential for unfolding of protein substrates subsequently hydrolyzed by HslV. HslU recognizes the N-terminal part of its protein substrates and unfolds these before they are guided to HslV for hydrolysis. The protein is ATP-dependent protease ATPase subunit HslU of Bacillus mycoides (strain KBAB4) (Bacillus weihenstephanensis).